The following is a 280-amino-acid chain: Intimin (280 aa).

In terms of domain architecture, Big-1 spans 1–92 (ITEIKADKTT…MLKLLEVEFF (92 aa)). The 47-residue stretch at 127–173 (ANGGNGKYTWYSANPAIASVDPSSGQVTLKDKGETTITVVSGDKQTA) folds into the BIG2 domain. An intrachain disulfide couples Cys-201 to Cys-278.

This sequence belongs to the intimin/invasin family.

Its subcellular location is the cell outer membrane. Functionally, an inverse autotransporter. The sequence is that of Intimin (eaeA) from Hafnia alvei.